The sequence spans 197 residues: Chromophore lyase CpcT/CpeT (197 aa).

The protein belongs to the CpcT/CpeT biliprotein lyase family.

In terms of biological role, covalently attaches a chromophore to Cys residue(s) of phycobiliproteins. This chain is Chromophore lyase CpcT/CpeT, found in Synechococcus sp. (strain WH8103).